Here is a 525-residue protein sequence, read N- to C-terminus: Peptide chain release factor 3 (525 aa).

In terms of domain architecture, tr-type G spans 9–276 (AKRRTFAIIS…GFTRYAPAPQ (268 aa)). GTP is bound by residues 18–25 (SHPDAGKT), 86–90 (DTPGH), and 140–143 (NKFD).

This sequence belongs to the TRAFAC class translation factor GTPase superfamily. Classic translation factor GTPase family. PrfC subfamily.

The protein resides in the cytoplasm. Functionally, increases the formation of ribosomal termination complexes and stimulates activities of RF-1 and RF-2. It binds guanine nucleotides and has strong preference for UGA stop codons. It may interact directly with the ribosome. The stimulation of RF-1 and RF-2 is significantly reduced by GTP and GDP, but not by GMP. The protein is Peptide chain release factor 3 of Francisella tularensis subsp. mediasiatica (strain FSC147).